Consider the following 159-residue polypeptide: U-actitoxin-Avd13b (159 aa).

The first 18 residues, 1-18 (MKSIFLVFFAVCLVKAEA), serve as a signal peptide directing secretion. Positions 19-26 (GKGRKREP) are excised as a propeptide. 2 disulfides stabilise this stretch: C33–C45 and C36–C52. Positions 59-60 (EP) are excised as a propeptide. Disulfide bonds link C67–C79 and C70–C86. Positions 93–94 (EP) are excised as a propeptide. Intrachain disulfides connect C101-C113 and C104-C120. Positions 127-128 (EP) are excised as a propeptide. Intrachain disulfides connect C135-C147 and C138-C154.

This sequence belongs to the sea anemone BBH family.

The protein localises to the secreted. It localises to the nematocyst. Inhibits ion channels. The sequence is that of U-actitoxin-Avd13b from Anemonia viridis (Snakelocks anemone).